Reading from the N-terminus, the 156-residue chain is Ribonuclease H (156 aa).

The RNase H type-1 domain occupies 1 to 142 (MGKQVEIFTD…CDELARAAAN (142 aa)). Mg(2+) contacts are provided by Asp10, Glu48, Asp70, and Asp134.

The protein belongs to the RNase H family. As to quaternary structure, monomer. Mg(2+) serves as cofactor.

Its subcellular location is the cytoplasm. The enzyme catalyses Endonucleolytic cleavage to 5'-phosphomonoester.. In terms of biological role, endonuclease that specifically degrades the RNA of RNA-DNA hybrids. This is Ribonuclease H from Photorhabdus luminescens (Xenorhabdus luminescens).